Consider the following 368-residue polypeptide: Chaperone protein DnaJ (368 aa).

A J domain is found at 5 to 70 (DYYQVLGVPR…KKRKLYDTHG (66 aa)). The CR-type zinc-finger motif lies at 124–201 (GVERQIQIPT…CNGAGRVEDH (78 aa)). 8 residues coordinate Zn(2+): C137, C140, C153, C156, C175, C178, C189, and C192. CXXCXGXG motif repeat units follow at residues 137 to 144 (CTHCHGSG), 153 to 160 (CGTCRGSG), 175 to 182 (CPHCGGRG), and 189 to 196 (CKVCNGAG).

The protein belongs to the DnaJ family. In terms of assembly, homodimer. Requires Zn(2+) as cofactor.

The protein resides in the cytoplasm. Participates actively in the response to hyperosmotic and heat shock by preventing the aggregation of stress-denatured proteins and by disaggregating proteins, also in an autonomous, DnaK-independent fashion. Unfolded proteins bind initially to DnaJ; upon interaction with the DnaJ-bound protein, DnaK hydrolyzes its bound ATP, resulting in the formation of a stable complex. GrpE releases ADP from DnaK; ATP binding to DnaK triggers the release of the substrate protein, thus completing the reaction cycle. Several rounds of ATP-dependent interactions between DnaJ, DnaK and GrpE are required for fully efficient folding. Also involved, together with DnaK and GrpE, in the DNA replication of plasmids through activation of initiation proteins. The protein is Chaperone protein DnaJ of Xylella fastidiosa (strain M23).